The primary structure comprises 696 residues: DNA-directed RNA polymerase subunit beta' (696 aa).

Zn(2+) is bound by residues Cys69, Cys71, Cys87, and Cys90. Mg(2+)-binding residues include Asp504, Asp506, and Asp508.

This sequence belongs to the RNA polymerase beta' chain family. RpoC1 subfamily. In terms of assembly, in plastids the minimal PEP RNA polymerase catalytic core is composed of four subunits: alpha, beta, beta', and beta''. When a (nuclear-encoded) sigma factor is associated with the core the holoenzyme is formed, which can initiate transcription. It depends on Mg(2+) as a cofactor. Zn(2+) serves as cofactor.

Its subcellular location is the plastid. It localises to the chloroplast. It carries out the reaction RNA(n) + a ribonucleoside 5'-triphosphate = RNA(n+1) + diphosphate. Functionally, DNA-dependent RNA polymerase catalyzes the transcription of DNA into RNA using the four ribonucleoside triphosphates as substrates. The sequence is that of DNA-directed RNA polymerase subunit beta' from Pinus thunbergii (Japanese black pine).